Here is a 207-residue protein sequence, read N- to C-terminus: Ras-related protein Rab-2A (207 aa).

12 to 20 (GDTGVGKSC) serves as a coordination point for GTP. An Effector region motif is present at residues 34-42 (HDLTIGVEF). GTP-binding positions include 60–64 (DTAGQ), 118–121 (NKSD), and 148–150 (SAK). A disordered region spans residues 187-207 (GAPTSKQDGTDQKPAGGGCCK). S-geranylgeranyl cysteine attachment occurs at residues Cys205 and Cys206.

It belongs to the small GTPase superfamily. Rab family.

Its subcellular location is the cell membrane. It carries out the reaction GTP + H2O = GDP + phosphate + H(+). Regulated by guanine nucleotide exchange factors (GEFs) which promote the exchange of bound GDP for free GTP, GTPase activating proteins (GAPs) which increase the GTP hydrolysis activity, and GDP dissociation inhibitors which inhibit the dissociation of the nucleotide from the GTPase. Its function is as follows. The small GTPases Rab are key regulators of intracellular membrane trafficking, from the formation of transport vesicles to their fusion with membranes. Rabs cycle between active GTP-bound and inactive GDP-bound states. In their active state, drive transport of vesicular carriers from donor organelles to acceptor organelles to regulate the membrane traffic that maintains organelle identity and morphology. In Dictyostelium discoideum (Social amoeba), this protein is Ras-related protein Rab-2A (rab2A).